Here is a 126-residue protein sequence, read N- to C-terminus: MKSLILVAAGGAIGASLRYLLGAGVYRLTGGPTGFPVAIMMANVLGSIAMGFFVVWAAHRGLTHLSPFVMTGVLGGFTTFSAFSLETVTLFERGEIWQAGLYVALSVGLSVFGLMAGLWVARGVYL.

The next 4 helical transmembrane spans lie at I5–V25, V37–A57, L65–L85, and L101–A121. Residues G75 and T78 each contribute to the Na(+) site.

It belongs to the fluoride channel Fluc/FEX (TC 1.A.43) family.

Its subcellular location is the cell inner membrane. It catalyses the reaction fluoride(in) = fluoride(out). Na(+) is not transported, but it plays an essential structural role and its presence is essential for fluoride channel function. Its function is as follows. Fluoride-specific ion channel. Important for reducing fluoride concentration in the cell, thus reducing its toxicity. The sequence is that of Fluoride-specific ion channel FluC from Roseobacter denitrificans (strain ATCC 33942 / OCh 114) (Erythrobacter sp. (strain OCh 114)).